Reading from the N-terminus, the 184-residue chain is Signal peptidase complex catalytic subunit SEC11 (184 aa).

The Cytoplasmic portion of the chain corresponds to 1–28 (MDFIKEQYNSLVLDLRKTFRNKRDGLSH). The chain crosses the membrane as a helical; Signal-anchor for type II membrane protein span at residues 29–49 (ILNVICLLLNALMIWKLLVVF). The Lumenal portion of the chain corresponds to 50 to 184 (TGCESPVVVV…MLIMILMGYE (135 aa)). Active-site charge relay system residues include Ser63, His101, and Asp127. The segment at 170-181 (AIVSIMLIMILM) is C-terminal short (CTS) helix.

Belongs to the peptidase S26B family. In terms of assembly, component of the signal peptidase complex (SPC) composed of a catalytic subunit SEC11/SPC21 and three accessory subunits SPC25, SPC3/SPC22, SPC1/SPC12. Within the complex, interacts with SPC25. The complex induces a local thinning of the ER membrane which is used to measure the length of the signal peptide (SP) h-region of protein substrates. This ensures the selectivity of the complex towards h-regions shorter than 18-20 amino acids. The complex interacts with the SEC61 channel-forming translocon complex and is involved in the import of classical signal sequence-containing proteins. Phosphorylated. Phosphorylation increases catalytic activity.

The protein localises to the endoplasmic reticulum membrane. The enzyme catalyses Cleavage of hydrophobic, N-terminal signal or leader sequences from secreted and periplasmic proteins.. Its activity is regulated as follows. Phosphorylation increases catalytic activity. Ca(2+) slightly increases catalytic activity in vitro. Functionally, catalytic component of the signal peptidase complex (SPC) which catalyzes the cleavage of N-terminal signal sequences from nascent proteins as they are translocated into the lumen of the endoplasmic reticulum. Specifically cleaves N-terminal signal peptides that contain a hydrophobic alpha-helix (h-region) shorter than 18-20 amino acids. The polypeptide is Signal peptidase complex catalytic subunit SEC11 (Plasmodium falciparum (isolate 3D7)).